The following is a 367-amino-acid chain: Probable dual-specificity RNA methyltransferase RlmN (367 aa).

The active-site Proton acceptor is the Glu-92. The region spanning 98–326 (QEYGLSVCVT…YDTLKKNGIN (229 aa)) is the Radical SAM core domain. A disulfide bond links Cys-105 and Cys-341. 3 residues coordinate [4Fe-4S] cluster: Cys-112, Cys-116, and Cys-119. Residues 164-165 (GE), Ser-196, 219-221 (SLH), and Asn-297 contribute to the S-adenosyl-L-methionine site. The active-site S-methylcysteine intermediate is the Cys-341.

This sequence belongs to the radical SAM superfamily. RlmN family. The cofactor is [4Fe-4S] cluster.

It is found in the cytoplasm. The enzyme catalyses adenosine(2503) in 23S rRNA + 2 reduced [2Fe-2S]-[ferredoxin] + 2 S-adenosyl-L-methionine = 2-methyladenosine(2503) in 23S rRNA + 5'-deoxyadenosine + L-methionine + 2 oxidized [2Fe-2S]-[ferredoxin] + S-adenosyl-L-homocysteine. The catalysed reaction is adenosine(37) in tRNA + 2 reduced [2Fe-2S]-[ferredoxin] + 2 S-adenosyl-L-methionine = 2-methyladenosine(37) in tRNA + 5'-deoxyadenosine + L-methionine + 2 oxidized [2Fe-2S]-[ferredoxin] + S-adenosyl-L-homocysteine. Its function is as follows. Specifically methylates position 2 of adenine 2503 in 23S rRNA and position 2 of adenine 37 in tRNAs. The protein is Probable dual-specificity RNA methyltransferase RlmN of Listeria welshimeri serovar 6b (strain ATCC 35897 / DSM 20650 / CCUG 15529 / CIP 8149 / NCTC 11857 / SLCC 5334 / V8).